A 277-amino-acid chain; its full sequence is Pantothenate synthetase (277 aa).

28–35 is an ATP binding site; the sequence is MGALHSGH. His35 functions as the Proton donor in the catalytic mechanism. Residue Gln59 coordinates (R)-pantoate. Gln59 is a binding site for beta-alanine. ATP contacts are provided by residues 145-148, Val174, and 182-185; these read GEKD and LSSR.

This sequence belongs to the pantothenate synthetase family. As to quaternary structure, homodimer.

The protein resides in the cytoplasm. It carries out the reaction (R)-pantoate + beta-alanine + ATP = (R)-pantothenate + AMP + diphosphate + H(+). It participates in cofactor biosynthesis; (R)-pantothenate biosynthesis; (R)-pantothenate from (R)-pantoate and beta-alanine: step 1/1. Its function is as follows. Catalyzes the condensation of pantoate with beta-alanine in an ATP-dependent reaction via a pantoyl-adenylate intermediate. In Anaplasma marginale (strain St. Maries), this protein is Pantothenate synthetase.